A 154-amino-acid polypeptide reads, in one-letter code: 8-oxo-dGTP diphosphatase (154 aa).

One can recognise a Nudix hydrolase domain in the interval 1–129; the sequence is MPQLATICYI…DHTFVEWLLE (129 aa). The Mg(2+) site is built by Gly38, Glu53, Glu56, and Glu57. The Nudix box motif lies at 38 to 59; that stretch reads GKLERGETPQECAAREILEETG.

This sequence belongs to the Nudix hydrolase family. As to quaternary structure, homotrimer. Mg(2+) is required as a cofactor.

The enzyme catalyses 8-oxo-dGTP + H2O = 8-oxo-dGMP + diphosphate + H(+). Its function is as follows. Involved in the DNA repair system to avoid A.T to G.C transversions. Degrades 8-oxo-dGTP to the monophosphate, but is also active on all of the nucleoside triphosphates. The polypeptide is 8-oxo-dGTP diphosphatase (mutX) (Streptococcus pneumoniae serotype 4 (strain ATCC BAA-334 / TIGR4)).